A 278-amino-acid polypeptide reads, in one-letter code: Elongation factor Ts (278 aa).

An involved in Mg(2+) ion dislocation from EF-Tu region spans residues 80-83 (TDFV).

This sequence belongs to the EF-Ts family.

Its subcellular location is the cytoplasm. In terms of biological role, associates with the EF-Tu.GDP complex and induces the exchange of GDP to GTP. It remains bound to the aminoacyl-tRNA.EF-Tu.GTP complex up to the GTP hydrolysis stage on the ribosome. This chain is Elongation factor Ts, found in Paenarthrobacter aurescens (strain TC1).